An 887-amino-acid polypeptide reads, in one-letter code: Alanine--tRNA ligase (887 aa).

Histidine 564, histidine 568, cysteine 676, and histidine 680 together coordinate Zn(2+). The interval 854 to 873 (GQGGGGRPDMAQSGGPKGNK) is disordered.

Belongs to the class-II aminoacyl-tRNA synthetase family. The cofactor is Zn(2+).

The protein resides in the cytoplasm. It catalyses the reaction tRNA(Ala) + L-alanine + ATP = L-alanyl-tRNA(Ala) + AMP + diphosphate. Catalyzes the attachment of alanine to tRNA(Ala) in a two-step reaction: alanine is first activated by ATP to form Ala-AMP and then transferred to the acceptor end of tRNA(Ala). Also edits incorrectly charged Ser-tRNA(Ala) and Gly-tRNA(Ala) via its editing domain. This is Alanine--tRNA ligase from Bartonella henselae (strain ATCC 49882 / DSM 28221 / CCUG 30454 / Houston 1) (Rochalimaea henselae).